Consider the following 406-residue polypeptide: chitinase-like effector (406 aa).

The N-terminal stretch at 1–23 is a signal peptide; sequence MLTLLPSLILLLSTLSLSTPANA. Residues 26–405 form the GH18 domain; the sequence is AIAKAYYPGW…DAVRHGAGFK (380 aa). Chitin contacts are provided by Tyr-138 and Trp-384.

Belongs to the glycosyl hydrolase 18 family.

Its subcellular location is the secreted. Functionally, catalytically impaired chitinase that binds efficiently to chitin, but not to chitosan, xylan, or cellulose. Despite the lack of chitinolytic activity, retains substrate binding specificity and acts as an effector to prevent chitin-triggered immunity by sequestering immunogenic chitin fragments. The protein is chitinase-like effector (Chi) of Moniliophthora roreri (Frosty pod rot fungus).